Consider the following 354-residue polypeptide: Isopentenyl-diphosphate delta-isomerase (354 aa).

11 to 12 serves as a coordination point for substrate; that stretch reads KK. FMN is bound by residues Ser67, 68-70, Ser98, and Asn126; that span reads SMT. Residue 98–100 participates in substrate binding; it reads SFK. Gln160 provides a ligand contact to substrate. Residue Glu161 participates in Mg(2+) binding. FMN is bound by residues Lys192, Thr222, and 289–290; that span reads AA.

Belongs to the IPP isomerase type 2 family. In terms of assembly, homooctamer. Dimer of tetramers. It depends on FMN as a cofactor. The cofactor is NADPH. Mg(2+) is required as a cofactor.

The protein localises to the cytoplasm. The enzyme catalyses isopentenyl diphosphate = dimethylallyl diphosphate. Its function is as follows. Involved in the biosynthesis of isoprenoids. Catalyzes the 1,3-allylic rearrangement of the homoallylic substrate isopentenyl (IPP) to its allylic isomer, dimethylallyl diphosphate (DMAPP). The protein is Isopentenyl-diphosphate delta-isomerase of Borreliella afzelii (strain PKo) (Borrelia afzelii).